The primary structure comprises 240 residues: Probable septum site-determining protein MinC (240 aa).

This sequence belongs to the MinC family. Interacts with MinD and FtsZ.

In terms of biological role, cell division inhibitor that blocks the formation of polar Z ring septums. Rapidly oscillates between the poles of the cell to destabilize FtsZ filaments that have formed before they mature into polar Z rings. Prevents FtsZ polymerization. In Acinetobacter baumannii (strain ATCC 17978 / DSM 105126 / CIP 53.77 / LMG 1025 / NCDC KC755 / 5377), this protein is Probable septum site-determining protein MinC.